The primary structure comprises 62 residues: Large ribosomal subunit protein uL29 (62 aa).

This sequence belongs to the universal ribosomal protein uL29 family.

This chain is Large ribosomal subunit protein uL29, found in Cytophaga hutchinsonii (strain ATCC 33406 / DSM 1761 / CIP 103989 / NBRC 15051 / NCIMB 9469 / D465).